The chain runs to 1335 residues: Regulatory-associated protein of mTOR (1335 aa).

Phosphoserine is present on residues S44 and S122. Phosphoserine; by MAPK8 is present on S696. T700 is a glycosylation site (O-linked (GlcNAc) threonine). T706 is subject to Phosphothreonine; by MAPK8. 2 positions are modified to phosphoserine; by RPS6KA1: S719 and S721. S722 is modified (phosphoserine; by AMPK and RPS6KA1). The residue at position 738 (S738) is a Phosphoserine. At S791 the chain carries Phosphoserine; by PKA. Phosphoserine; by AMPK is present on S792. A phosphoserine mark is found at S836 and S855. The segment at 850–943 (VLDTSSLTQS…PEQTADDADD (94 aa)) is disordered. Over residues 851 to 866 (LDTSSLTQSAPASPTN) the composition is skewed to polar residues. S859 carries the post-translational modification Phosphoserine; by MTOR. Residue S863 is modified to Phosphoserine; by MAPK8, MTOR and NLK. T865 is modified (phosphothreonine). A compositionally biased stretch (low complexity) spans 874-887 (AGGSPPASSTSSSS). S877 is modified (phosphoserine; by TBK1). Residues K932 and K948 each participate in a glycyl lysine isopeptide (Lys-Gly) (interchain with G-Cter in ubiquitin) cross-link. S982 bears the Phosphoserine mark. 7 WD repeats span residues 1020–1061 (NRNP…DYFH), 1065–1106 (PRYT…EKNP), 1121–1160 (TTRG…KVQD), 1164–1203 (GADS…SECR), 1209–1249 (EHTA…SVNV), 1251–1291 (QIVK…NNIK), and 1299–1335 (QRVG…KRVR). An N6-acetyllysine modification is found at K1097.

It belongs to the WD repeat RAPTOR family. In terms of assembly, part of the mechanistic target of rapamycin complex 1 (mTORC1) which contains MTOR, MLST8 and RPTOR. mTORC1 associates with AKT1S1/PRAS40, which inhibits its activity. mTORC1 associates with DEPTOR, which regulates its activity. mTORC1 binds to and is inhibited by FKBP12-rapamycin. Forms a complex with MTOR under both leucine-rich and -poor conditions. Interacts with (via TOS motifs) EIF4EBP1 and RPS6KB1; interaction is independent of its association with MTOR. Binds preferentially to poorly or non-phosphorylated forms of EIF4EBP1, and this binding is critical to the ability of MTOR to catalyze phosphorylation. Interacts with ULK1 in a nutrient-dependent manner; the interaction is reduced during starvation. Interacts with GTP-bound form of RagA/RRAGA or RagB/RRAGB and GDP-bound form of RagC/RRAGC or RagD/RRAGD, promoting recruitment of mTORC1 to the lysosomes. Interacts (when phosphorylated by AMPK) with 14-3-3 protein, leading to inhibition of its activity. Interacts with SPAG5; SPAG5 competes with MTOR for RPTOR-binding, resulting in decreased mTORC1 formation. Interacts with WAC; WAC positively regulates MTOR activity by promoting the assembly of the TTT complex composed of TELO2, TTI1 and TTI2 and the RUVBL complex composed of RUVBL1 and RUVBL2 into the TTT-RUVBL complex which leads to the dimerization of the mTORC1 complex and its subsequent activation. Interacts with G3BP1. The complex formed with G3BP1 and SPAG5 is increased by oxidative stress. Interacts with HTR6. Interacts with PIH1D1. Interacts with LARP1. Interacts with BRAT1. Interacts with SIK3. Interacts with SLC38A7; this interaction mediates the recruitment of mTORC1 to the lysosome and its subsequent activation. As to quaternary structure, (Microbial infection) Interacts with vaccinia virus protein F17; this interaction dysregulates mTOR. Insulin-stimulated phosphorylation at Ser-863 by MTOR and MAPK8 regulates mTORC1 activity. Phosphorylated at Ser-863 by NLK in response to stress, disrupting the interaction with small GTPases Rag (RagA/RRAGA, RagB/RRAGB, RagC/RRAGC and/or RagD/RRAGD), thereby preventing lysosome recruitment and activation of the mTORC1 complex. Osmotic stress also induces phosphorylation at Ser-696, Thr-706 and Ser-863 by MAPK8. Ser-863 phosphorylation is required for phosphorylation at Ser-855 and Ser-859. In response to nutrient limitation, phosphorylated at Ser-722 and Ser-792 by AMPK; phosphorylation promotes interaction with 14-3-3 proteins, leading to negative regulation of the mTORC1 complex. Phosphorylation at Ser-722 and Ser-792 by AMPK in response to glucose starvation inhibits O-GlcNAcylation by OGT and subsequent activation of mTORC1. In response to growth factors, phosphorylated at Ser-719, Ser-721 and Ser-722 by RPS6KA1, which stimulates mTORC1 activity. Phosphorylation at Ser-791 by PKA downstream of cAMP inhibits the mTORC1 complex. Phosphorylated at Ser-877 by TBK1, leading to negative regulation of the mTORC1 complex. Post-translationally, O-GlcNAcylated by OGT upon glucose sufficiency, promoting interaction with small GTPases Rag (RagA/RRAGA, RagB/RRAGB, RagC/RRAGC and/or RagD/RRAGD) and subsequent recruitment of mTORC1 to lysosomal membranes, leading to activation of the mTORC1 complex. Phosphorylation at Ser-722 and Ser-792 by AMPK in response to glucose starvation inhibits O-GlcNAcylation. In terms of processing, acetylation at Lys-1097 by EP300/p300 in response to leucine metabolite acetyl-coA promotes its activity, leading to activation of the mTORC1 complex. Acetylation is decreased in response to fasting. Ubiquitinated, leading to its degradation by the proteasome. Deubiquitinated by OTUB1 via a non-catalytic mechanism. Ubiquitinated by an E3 ubiquitin ligase complex containing VHL. In terms of tissue distribution, highly expressed in skeletal muscle, and in a lesser extent in brain, lung, small intestine, kidney and placenta. Widely expressed, with highest levels in nasal mucosa and pituitary and lowest in spleen.

The protein localises to the lysosome membrane. Its subcellular location is the cytoplasm. It localises to the cytoplasmic granule. Component of the mechanistic target of rapamycin complex 1 (mTORC1), an evolutionarily conserved central nutrient sensor that stimulates anabolic reactions and macromolecule biosynthesis to promote cellular biomass generation and growth. In response to nutrients, growth factors or amino acids, mTORC1 is recruited to the lysosome membrane and promotes protein, lipid and nucleotide synthesis by phosphorylating several substrates, such as ribosomal protein S6 kinase (RPS6KB1 and RPS6KB2) and EIF4EBP1 (4E-BP1). In the same time, it inhibits catabolic pathways by phosphorylating the autophagy initiation components ULK1 and ATG13, as well as transcription factor TFEB, a master regulators of lysosomal biogenesis and autophagy. The mTORC1 complex is inhibited in response to starvation and amino acid depletion. Within the mTORC1 complex, RPTOR acts both as a molecular adapter, which (1) mediates recruitment of mTORC1 to lysosomal membranes via interaction with small GTPases Rag (RagA/RRAGA, RagB/RRAGB, RagC/RRAGC and/or RagD/RRAGD), and a (2) substrate-specific adapter, which promotes substrate specificity by binding to TOS motif-containing proteins and direct them towards the active site of the MTOR kinase domain for phosphorylation. mTORC1 complex regulates many cellular processes, such as odontoblast and osteoclast differentiation or neuronal transmission. mTORC1 complex in excitatory neuronal transmission is required for the prosocial behavior induced by the psychoactive substance lysergic acid diethylamide (LSD). In Homo sapiens (Human), this protein is Regulatory-associated protein of mTOR.